A 97-amino-acid chain; its full sequence is MTLFASISSISNPSTSSKSSIVSFGSGTSMGSNSIACGGCGGGSGGILGSGLGFGLGLGLNLSGGFRSRGACRGNNGGSGYPGNGGMGGGNGSCCGI.

Disordered stretches follow at residues 1–20 (MTLF…SKSS) and 78–97 (GSGY…CCGI).

It belongs to the hssA/B family.

The protein is HssA/B-like protein 48 (hssl48) of Dictyostelium discoideum (Social amoeba).